The following is a 288-amino-acid chain: MNEQKMNEQMKKTAKTSGQKGPGGRALDRLTLKQDEARPVQNTRVEAPRVTYTIRDESEISPETEEDGFPDGYLECIIRGEFSEPILEEDFLFKSFESLEEVEQNLSRQVLEASSLLESSLEYMTKGTKQEKTEVTQETPPLRVGASSLLAGGPAEKPEGGVYCGVLSMLECPQAGCKKKLRGKTALRKHMLVHGPRRHVCAECGKAFTESSKLKRHFLVHTGEKPYQCTFEGCGKRFSLDFNLRTHIRIHTGERRFVCPFDGCEKSFIQSNNQKIHILTHAKAGKKC.

Basic and acidic residues-rich tracts occupy residues 1-11 (MNEQKMNEQMK) and 26-38 (ALDR…DEAR). Positions 1–48 (MNEQKMNEQMKKTAKTSGQKGPGGRALDRLTLKQDEARPVQNTRVEAP) are disordered. 4 C2H2-type zinc fingers span residues 170 to 194 (LECP…MLVH), 199 to 221 (HVCA…FLVH), 227 to 251 (YQCT…IRIH), and 258 to 281 (VCPF…ILTH). Residues lysine 213 and lysine 215 each participate in a glycyl lysine isopeptide (Lys-Gly) (interchain with G-Cter in ubiquitin) cross-link.

It belongs to the krueppel C2H2-type zinc-finger protein family. Post-translationally, polyubiquitinated by RNF12, leading to proteasomal degradation. As to expression, restricted to testis, to germ cells in the early stages of spermatogenesis. Not expressed in spermatids, nor spermatozoa. Expressed in embryonic stem (ES) cells.

It localises to the nucleus. Its function is as follows. Involved in the reprogramming of X-chromosome inactivation during the acquisition of pluripotency. Required for efficient elongation of TSIX, a non-coding RNA antisense to XIST. Binds DXPas34 enhancer within the TSIX promoter. Involved in ES cell self-renewal. The chain is Zinc finger protein 42 (Zfp42) from Mus musculus (Mouse).